Here is a 189-residue protein sequence, read N- to C-terminus: Putative OVARIAN TUMOR DOMAIN-containing deubiquitinating enzyme 8 (189 aa).

The region spanning 1 to 103 (MMKSDGNCQF…GIHFNSIYKK (103 aa)) is the OTU domain. The active site involves aspartate 5. Cysteine 8 functions as the Nucleophile in the catalytic mechanism. The active site involves histidine 96. Positions 105–189 (KEKGSRSSSS…NRNHHFHYSE (85 aa)) are disordered. Residues 120–181 (WMKLQRKKEN…KKEKKEKKNR (62 aa)) are a coiled coil. 2 consecutive short sequence motifs (nuclear localization signal) follow at residues 125–132 (RKKENEAK) and 163–170 (KKKAKVQK). Residues 126-174 (KKENEAKKKEEEEKERKDMEKEEKKKDKEDKKKDKEDKKKAKVQKEKKE) are compositionally biased toward basic and acidic residues. Positions 175-189 (KKEKKNRNHHFHYSE) are enriched in basic residues.

The protein belongs to the peptidase C85 family.

The protein resides in the nucleus. The enzyme catalyses Thiol-dependent hydrolysis of ester, thioester, amide, peptide and isopeptide bonds formed by the C-terminal Gly of ubiquitin (a 76-residue protein attached to proteins as an intracellular targeting signal).. Hydrolase that can remove conjugated ubiquitin from proteins in vitro and may therefore play an important regulatory role at the level of protein turnover by preventing degradation. This chain is Putative OVARIAN TUMOR DOMAIN-containing deubiquitinating enzyme 8, found in Arabidopsis thaliana (Mouse-ear cress).